The sequence spans 134 residues: UPF0412 protein YaaI (134 aa).

The first 23 residues, 1-23 (MKSVITISASLAISLMLCCTAQA), serve as a signal peptide directing secretion.

It belongs to the UPF0412 family.

This is UPF0412 protein YaaI from Escherichia coli (strain UTI89 / UPEC).